The chain runs to 353 residues: Methylthioribose-1-phosphate isomerase (353 aa).

Residues 51-53 (RGA), Arg94, and Gln203 contribute to the substrate site. Asp244 acts as the Proton donor in catalysis. 254 to 255 (NK) provides a ligand contact to substrate.

It belongs to the eIF-2B alpha/beta/delta subunits family. MtnA subfamily.

The enzyme catalyses 5-(methylsulfanyl)-alpha-D-ribose 1-phosphate = 5-(methylsulfanyl)-D-ribulose 1-phosphate. It functions in the pathway amino-acid biosynthesis; L-methionine biosynthesis via salvage pathway; L-methionine from S-methyl-5-thio-alpha-D-ribose 1-phosphate: step 1/6. In terms of biological role, catalyzes the interconversion of methylthioribose-1-phosphate (MTR-1-P) into methylthioribulose-1-phosphate (MTRu-1-P). This chain is Methylthioribose-1-phosphate isomerase, found in Nostoc punctiforme (strain ATCC 29133 / PCC 73102).